The chain runs to 208 residues: Harpin secretion protein HrpW (208 aa).

Transmembrane regions (helical) follow at residues 2–22 (LALF…CTAF), 46–66 (ALYG…AHDI), 149–169 (IGFL…NLLL), and 176–196 (VSPM…VSGW).

This sequence belongs to the FliP/MopC/SpaP family.

Its subcellular location is the cell membrane. Required for the secretion of harpin. The polypeptide is Harpin secretion protein HrpW (hrpW) (Pseudomonas syringae pv. syringae).